Consider the following 118-residue polypeptide: UPF0102 protein lpg2994 (118 aa).

Belongs to the UPF0102 family.

This is UPF0102 protein lpg2994 from Legionella pneumophila subsp. pneumophila (strain Philadelphia 1 / ATCC 33152 / DSM 7513).